Here is a 734-residue protein sequence, read N- to C-terminus: Photosystem I P700 chlorophyll a apoprotein A2 (734 aa).

8 helical membrane passes run 46–69 (IFASHFGQLAIIFLWTSGNLFHVA), 135–158 (LYTGALFLLFLSALSLIGGWLHLQ), 175–199 (LNHHLSGLFGVSSLAWTGHLVHVAI), 273–291 (MAHHHLAIAILFLIAGHMY), 330–353 (IHFQLGLALASLGVITSLVAQHMY), 369–395 (AALYTHHQYIAGFIMTGAFAHGAIFFI), 417–439 (AIISHLSWASLFLGFHTLGLYVH), and 517–535 (FLVHHAIALGLHTTTLILV). Residues Cys-559 and Cys-568 each contribute to the [4Fe-4S] cluster site. 2 consecutive transmembrane segments (helical) span residues 575–596 (AFYLAVFWMLNTIGWVTFYWHW) and 643–665 (LSVWAWMFLFGHLVWATGFMFLI). Chlorophyll a contacts are provided by His-654, Met-662, and Tyr-670. Trp-671 provides a ligand contact to phylloquinone. A helical transmembrane segment spans residues 707–727 (LVGLAHFSVGYIFTYAAFLIA).

It belongs to the PsaA/PsaB family. The PsaA/B heterodimer binds the P700 chlorophyll special pair and subsequent electron acceptors. PSI consists of a core antenna complex that captures photons, and an electron transfer chain that converts photonic excitation into a charge separation. The eukaryotic PSI reaction center is composed of at least 11 subunits. P700 is a chlorophyll a/chlorophyll a' dimer, A0 is one or more chlorophyll a, A1 is one or both phylloquinones and FX is a shared 4Fe-4S iron-sulfur center. is required as a cofactor.

It localises to the plastid. The protein resides in the chloroplast thylakoid membrane. The catalysed reaction is reduced [plastocyanin] + hnu + oxidized [2Fe-2S]-[ferredoxin] = oxidized [plastocyanin] + reduced [2Fe-2S]-[ferredoxin]. PsaA and PsaB bind P700, the primary electron donor of photosystem I (PSI), as well as the electron acceptors A0, A1 and FX. PSI is a plastocyanin-ferredoxin oxidoreductase, converting photonic excitation into a charge separation, which transfers an electron from the donor P700 chlorophyll pair to the spectroscopically characterized acceptors A0, A1, FX, FA and FB in turn. Oxidized P700 is reduced on the lumenal side of the thylakoid membrane by plastocyanin. The chain is Photosystem I P700 chlorophyll a apoprotein A2 from Crucihimalaya wallichii (Rock-cress).